The sequence spans 235 residues: Protocatechuate 3,4-dioxygenase beta chain (235 aa).

The Fe cation site is built by Y107, Y146, H159, and H161.

Belongs to the intradiol ring-cleavage dioxygenase family. As to quaternary structure, the enzyme is an oligomer of 12 copies of the alpha and beta chains. Fe(3+) is required as a cofactor.

It carries out the reaction 3,4-dihydroxybenzoate + O2 = 3-carboxy-cis,cis-muconate + 2 H(+). It participates in aromatic compound metabolism; beta-ketoadipate pathway; 3-carboxy-cis,cis-muconate from 3,4-dihydroxybenzoate: step 1/1. Plays an essential role in the utilization of numerous aromatic and hydroaromatic compounds via the beta-ketoadipate pathway. The polypeptide is Protocatechuate 3,4-dioxygenase beta chain (pcaH) (Burkholderia cepacia (Pseudomonas cepacia)).